The sequence spans 552 residues: Cytochrome P450 97B1, chloroplastic (552 aa).

The N-terminal 52 residues, 1–52 (MVAAPISTVKLTDANLHTRFHSSSSSTPSTLSLPLSLHFHFSSHSKRFSSIR), are a transit peptide targeting the chloroplast. C528 is a heme binding site.

It belongs to the cytochrome P450 family. It depends on heme as a cofactor.

It localises to the plastid. Its subcellular location is the chloroplast membrane. The sequence is that of Cytochrome P450 97B1, chloroplastic (CYP97B1) from Pisum sativum (Garden pea).